A 151-amino-acid polypeptide reads, in one-letter code: D-aminoacyl-tRNA deacylase (151 aa).

A Gly-cisPro motif, important for rejection of L-amino acids motif is present at residues 142-143 (GP).

Belongs to the DTD family. In terms of assembly, homodimer.

It localises to the cytoplasm. It catalyses the reaction glycyl-tRNA(Ala) + H2O = tRNA(Ala) + glycine + H(+). The catalysed reaction is a D-aminoacyl-tRNA + H2O = a tRNA + a D-alpha-amino acid + H(+). Its function is as follows. An aminoacyl-tRNA editing enzyme that deacylates mischarged D-aminoacyl-tRNAs. Also deacylates mischarged glycyl-tRNA(Ala), protecting cells against glycine mischarging by AlaRS. Acts via tRNA-based rather than protein-based catalysis; rejects L-amino acids rather than detecting D-amino acids in the active site. By recycling D-aminoacyl-tRNA to D-amino acids and free tRNA molecules, this enzyme counteracts the toxicity associated with the formation of D-aminoacyl-tRNA entities in vivo and helps enforce protein L-homochirality. This is D-aminoacyl-tRNA deacylase from Psychrobacter arcticus (strain DSM 17307 / VKM B-2377 / 273-4).